We begin with the raw amino-acid sequence, 34 residues long: Small ribosomal subunit protein uS2c (34 aa).

The protein belongs to the universal ribosomal protein uS2 family.

It localises to the plastid. Its subcellular location is the chloroplast. This chain is Small ribosomal subunit protein uS2c (rps2), found in Ochrosphaera neapolitana.